Consider the following 190-residue polypeptide: uncharacterized protein (190 aa).

This is an uncharacterized protein from Homo sapiens (Human).